The chain runs to 84 residues: Beta-mammal toxin Cn2 (84 aa).

Residues 1 to 16 form the signal peptide; it reads LLIITACLALIGTVWA. One can recognise an LCN-type CS-alpha/beta domain in the interval 17 to 82; that stretch reads KEGYLVDKNT…VWPLPNKRCS (66 aa). 4 disulfides stabilise this stretch: C28-C81, C32-C57, C41-C62, and C45-C64. Position 82 is a serine amide (S82).

Belongs to the long (4 C-C) scorpion toxin superfamily. Sodium channel inhibitor family. Beta subfamily. Expressed by the venom gland.

The protein resides in the secreted. Mammal beta-toxins bind voltage-independently at site-4 of sodium channels (Nav) and shift the activation voltage to more negative potentials. This toxin is active against mammals. The polypeptide is Beta-mammal toxin Cn2 (Centruroides noxius (Mexican scorpion)).